The chain runs to 62 residues: UPF0337 protein XCC0070 (62 aa).

The disordered stretch occupies residues 32–62 (LEGAAEKNIGKVQRKAGELADDVRDATKSTR).

This sequence belongs to the UPF0337 (CsbD) family.

This Xanthomonas campestris pv. campestris (strain ATCC 33913 / DSM 3586 / NCPPB 528 / LMG 568 / P 25) protein is UPF0337 protein XCC0070.